The chain runs to 300 residues: Geranylgeranyl pyrophosphate synthase (300 aa).

Position 1 is an N-acetylmethionine (Met-1). The isopentenyl diphosphate site is built by Lys-25, Arg-28, and His-57. Residues Asp-64 and Asp-68 each contribute to the Mg(2+) site. Arg-73 provides a ligand contact to dimethylallyl diphosphate. Residue Arg-74 coordinates isopentenyl diphosphate. Lys-151, Thr-152, Gln-185, Lys-202, and Lys-212 together coordinate dimethylallyl diphosphate.

Belongs to the FPP/GGPP synthase family. As to quaternary structure, homohexamer; trimer of homodimers. Requires Mg(2+) as cofactor.

The protein localises to the cytoplasm. It is found in the perinuclear region. Its subcellular location is the myofibril. The protein resides in the sarcomere. It localises to the z line. It catalyses the reaction isopentenyl diphosphate + dimethylallyl diphosphate = (2E)-geranyl diphosphate + diphosphate. It carries out the reaction isopentenyl diphosphate + (2E)-geranyl diphosphate = (2E,6E)-farnesyl diphosphate + diphosphate. The enzyme catalyses isopentenyl diphosphate + (2E,6E)-farnesyl diphosphate = (2E,6E,10E)-geranylgeranyl diphosphate + diphosphate. It participates in isoprenoid biosynthesis; farnesyl diphosphate biosynthesis; farnesyl diphosphate from geranyl diphosphate and isopentenyl diphosphate: step 1/1. It functions in the pathway isoprenoid biosynthesis; geranyl diphosphate biosynthesis; geranyl diphosphate from dimethylallyl diphosphate and isopentenyl diphosphate: step 1/1. Its pathway is isoprenoid biosynthesis; geranylgeranyl diphosphate biosynthesis; geranylgeranyl diphosphate from farnesyl diphosphate and isopentenyl diphosphate: step 1/1. Functionally, catalyzes the trans-addition of the three molecules of IPP onto DMAPP to form geranylgeranyl pyrophosphate, an important precursor of carotenoids and geranylated proteins. The sequence is that of Geranylgeranyl pyrophosphate synthase (GGPS1) from Bos taurus (Bovine).